The following is a 197-amino-acid chain: Phosphoheptose isomerase (197 aa).

The region spanning 34 to 196 is the SIS domain; that stretch reads MVHCLLGGNK…DRTLFPQDEQ (163 aa). 49-51 contributes to the substrate binding site; the sequence is NGG. Zn(2+) is bound by residues His58 and Glu62. Substrate is bound by residues Glu62, 91 to 92, 117 to 119, Ser122, and Gln172; these read ND and STS. Residues Gln172 and His180 each contribute to the Zn(2+) site.

This sequence belongs to the SIS family. GmhA subfamily. Homotetramer. Zn(2+) is required as a cofactor.

It localises to the cytoplasm. The enzyme catalyses 2 D-sedoheptulose 7-phosphate = D-glycero-alpha-D-manno-heptose 7-phosphate + D-glycero-beta-D-manno-heptose 7-phosphate. Its pathway is carbohydrate biosynthesis; D-glycero-D-manno-heptose 7-phosphate biosynthesis; D-glycero-alpha-D-manno-heptose 7-phosphate and D-glycero-beta-D-manno-heptose 7-phosphate from sedoheptulose 7-phosphate: step 1/1. Catalyzes the isomerization of sedoheptulose 7-phosphate in D-glycero-D-manno-heptose 7-phosphate. The polypeptide is Phosphoheptose isomerase (Shewanella sp. (strain W3-18-1)).